Consider the following 189-residue polypeptide: Transcription factor FapR (189 aa).

This sequence belongs to the FapR family.

In terms of biological role, transcriptional factor involved in regulation of membrane lipid biosynthesis by repressing genes involved in fatty acid and phospholipid metabolism. This chain is Transcription factor FapR, found in Listeria monocytogenes serotype 4b (strain CLIP80459).